A 416-amino-acid polypeptide reads, in one-letter code: F-box/FBD/LRR-repeat protein At1g13570 (416 aa).

Residues 5–53 (PDFISDLPQSIIENILTRLSIRDAIRTSVLSSKWRYKWSTLTDLVFDEK) form the F-box domain. 5 LRR repeats span residues 115-142 (VLKLGEGEFRVPACLFNCLKLTCLELCH), 164-189 (QILVAPEVIESLISGCPLLEFLSLSY), 203-229 (MYLYLDGEFKDIFLENTPKLVAISVSM), 238-263 (FEQSSDYNLVKFLGGVPLLEKLVGYI), and 294-321 (CFEDADEVLVLLRLVTHSPNLKELKVSA). The region spanning 346 to 384 (LPSLESVKITDASGIRYELEFIRFLLGTSPVLETVTVSS) is the FBD domain.

The chain is F-box/FBD/LRR-repeat protein At1g13570 from Arabidopsis thaliana (Mouse-ear cress).